A 583-amino-acid polypeptide reads, in one-letter code: ATP-dependent lipid A-core flippase (583 aa).

The next 5 membrane-spanning stretches (helical) occupy residues 27 to 47 (LAVA…MVSL), 69 to 89 (LLVF…TYCL), 142 to 162 (ALVS…LMFY), 165 to 185 (WQLS…IGFV), and 249 to 269 (AAAN…VLYL). Residues 28–310 (AVAVVALIIN…LTNVTSQFQR (283 aa)) enclose the ABC transmembrane type-1 domain. The ABC transporter domain occupies 342-578 (VNVKDISFTY…DGAYAQLHRI (237 aa)). 376-383 (GRSGSGKS) contributes to the ATP binding site.

It belongs to the ABC transporter superfamily. Lipid exporter (TC 3.A.1.106) family. Homodimer.

It localises to the cell inner membrane. The enzyme catalyses ATP + H2O + lipid A-core oligosaccharideSide 1 = ADP + phosphate + lipid A-core oligosaccharideSide 2.. Involved in lipopolysaccharide (LPS) biosynthesis. Translocates lipid A-core from the inner to the outer leaflet of the inner membrane. Transmembrane domains (TMD) form a pore in the inner membrane and the ATP-binding domain (NBD) is responsible for energy generation. This Vibrio vulnificus (strain CMCP6) protein is ATP-dependent lipid A-core flippase.